The primary structure comprises 409 residues: Arginine deiminase (409 aa).

Cysteine 399 acts as the Amidino-cysteine intermediate in catalysis.

This sequence belongs to the arginine deiminase family.

It localises to the cytoplasm. It catalyses the reaction L-arginine + H2O = L-citrulline + NH4(+). The protein operates within amino-acid degradation; L-arginine degradation via ADI pathway; carbamoyl phosphate from L-arginine: step 1/2. This is Arginine deiminase from Streptococcus gordonii (strain Challis / ATCC 35105 / BCRC 15272 / CH1 / DL1 / V288).